A 204-amino-acid polypeptide reads, in one-letter code: DNA polymerase epsilon subunit D (204 aa).

A compositionally biased stretch (basic and acidic residues) spans 165 to 177; that stretch reads KEVQRRRAEKTPA. Residues 165-204 are disordered; the sequence is KEVQRRRAEKTPAADEGQAEEGDAADEEEGSHKRAKLDEH. Residues 181-193 are compositionally biased toward acidic residues; sequence GQAEEGDAADEEE. Basic and acidic residues predominate over residues 194-204; sequence GSHKRAKLDEH.

As to quaternary structure, heterotetramer. Consists of four subunits: POL2, DPB2, DPB3 and DPB4.

The protein resides in the nucleus. Its function is as follows. As accessory component of the DNA polymerase epsilon (DNA polymerase II) participates in chromosomal DNA replication. The sequence is that of DNA polymerase epsilon subunit D (DPB4) from Eremothecium gossypii (strain ATCC 10895 / CBS 109.51 / FGSC 9923 / NRRL Y-1056) (Yeast).